A 157-amino-acid chain; its full sequence is 2-C-methyl-D-erythritol 2,4-cyclodiphosphate synthase (157 aa).

The a divalent metal cation site is built by aspartate 8 and histidine 10. 4-CDP-2-C-methyl-D-erythritol 2-phosphate is bound by residues 8 to 10 (DVH) and 34 to 35 (HS). Histidine 42 is a binding site for a divalent metal cation. Residues 56-58 (DIG), 61-65 (FPDTD), 100-106 (AQKPKMA), 132-135 (TTEE), and phenylalanine 139 each bind 4-CDP-2-C-methyl-D-erythritol 2-phosphate.

This sequence belongs to the IspF family. In terms of assembly, homotrimer. It depends on a divalent metal cation as a cofactor.

The catalysed reaction is 4-CDP-2-C-methyl-D-erythritol 2-phosphate = 2-C-methyl-D-erythritol 2,4-cyclic diphosphate + CMP. It participates in isoprenoid biosynthesis; isopentenyl diphosphate biosynthesis via DXP pathway; isopentenyl diphosphate from 1-deoxy-D-xylulose 5-phosphate: step 4/6. In terms of biological role, involved in the biosynthesis of isopentenyl diphosphate (IPP) and dimethylallyl diphosphate (DMAPP), two major building blocks of isoprenoid compounds. Catalyzes the conversion of 4-diphosphocytidyl-2-C-methyl-D-erythritol 2-phosphate (CDP-ME2P) to 2-C-methyl-D-erythritol 2,4-cyclodiphosphate (ME-CPP) with a corresponding release of cytidine 5-monophosphate (CMP). The protein is 2-C-methyl-D-erythritol 2,4-cyclodiphosphate synthase of Clostridium novyi (strain NT).